A 70-amino-acid chain; its full sequence is uncharacterized protein (70 aa).

Residues 15-37 (LLVSSISESAVALIIITIRILFS) form a helical membrane-spanning segment.

The protein localises to the membrane. This is an uncharacterized protein from Saccharomyces cerevisiae (strain ATCC 204508 / S288c) (Baker's yeast).